We begin with the raw amino-acid sequence, 240 residues long: MVLLSEIPGGSNGDDPNMNPQELPEELIESIVAPIPRCYYPSLSLLSRAFRHVITSQQLFVTRSGLGFKEPVLYAFIGCTPYTTPRWFILRRSNIPLQLRRLNSLPHMFPGAAVVTIGYKIYVMGGYNYQPVSTVIIIDCRFHTWHYLQDMQRARYHATPGVIDGRIYVIGGRKKQDADWVEVFDVTTESWETVPTQCPNEASENGLFVTYAVMQGRILGVFLLTNQDKVYGSHWELYVS.

Residues methionine 1–proline 20 form a disordered region. Residues asparagine 17–arginine 63 form the F-box domain. 2 Kelch repeats span residues lysine 120 to glycine 165 and isoleucine 167 to alanine 212.

The polypeptide is Putative F-box/kelch-repeat protein At2g29860 (Arabidopsis thaliana (Mouse-ear cress)).